The chain runs to 38 residues: Potassium channel toxin alpha-KTx 3.11 (38 aa).

3 cysteine pairs are disulfide-bonded: Cys-8–Cys-28, Cys-14–Cys-33, and Cys-18–Cys-35.

It belongs to the short scorpion toxin superfamily. Potassium channel inhibitor family. Alpha-KTx 03 subfamily. In terms of tissue distribution, expressed by the venom gland.

The protein resides in the secreted. Blocks the voltage-gated potassium channel Kv1.3/KCNA3 (IC(50)=7.2 nM). Correnti and colleagues have also shown that this toxin inhibits Kv1.1/KCNA1, which is different from Abdel-Mottaleb and colleagues conclusions. In Odontobuthus doriae (Yellow Iranian scorpion), this protein is Potassium channel toxin alpha-KTx 3.11.